A 1314-amino-acid chain; its full sequence is Enfumafungin synthase efuA (1314 aa).

Residues methionine 1–glycine 680 form a terpenne cyclase region. 2 PFTB repeats span residues leucine 19–leucine 62 and glycine 66–glycine 107. The next 3 helical transmembrane spans lie at phenylalanine 133–methionine 153, alanine 155–alanine 175, and tyrosine 230–leucine 250. The PFTB 3 repeat unit spans residues leucine 260–serine 300. Aspartate 395 serves as the catalytic Proton donor. 2 PFTB repeats span residues valine 417 to valine 458 and cysteine 546 to arginine 597. Residues isoleucine 681–lysine 1314 form a glycosyltransferase region. Residues alanine 1200–lysine 1220 traverse the membrane as a helical segment. Positions aspartate 1289–lysine 1314 are disordered. Low complexity predominate over residues alanine 1292–glycine 1302.

In the N-terminal section; belongs to the terpene cyclase/mutase family. This sequence in the C-terminal section; belongs to the glycosyltransferase 28 family.

The protein localises to the membrane. It participates in secondary metabolite biosynthesis; terpenoid biosynthesis. In terms of biological role, terpene cyclase-glycosyl transferase fusion protein; part of the gene cluster that mediates the biosynthesis of enfumafungin, a glycosylated fernene-type triterpenoid with potent antifungal activity, mediated by its interaction with beta-1,3-glucan synthase and the fungal cell wall. The pathway begins with the terpene cyclase-glycosyl transferase fusion protein that most likely uses 2,3-oxidosqualene as substrate and catalyzes glycosylation immediately after cyclization. The fernene glycoside then could be processed by the desaturase efuI which catalyzes isomerization of a double bond established by efuA to form the core structure. The latter would then undergo a series of hydroxylations in unknown order at C-2, C-19, C-23 and C-25, which would be catalyzed by two of the three cytochrome P450 monooxygenases efuB, efuG or efuH. The hydroxy-group at C-25 becomes oxidized by the dehydrogenase efuE to enable a spontaneous, non-enzymatic hemiacetal formation with C-23. After hydroxylation at C-2, acetylation by the acetyltransferase efuC takes place. The final steps in enfumafungin biosynthesis require expansion of the 5-membered ring by lactonization via a Baeyer-Villiger reaction mediated by one of the BGC's cytochrome P450 monooxygenases (efuB, efuG or efuH) followed by ring cleavage. This type of reaction would establish a double bond between C-20 and C-21 which could be reduced by the reductase efuL to form the final product. The polypeptide is Enfumafungin synthase efuA (Hormonema carpetanum).